The primary structure comprises 236 residues: CD81 antigen (236 aa).

Topologically, residues 1-12 (MGVEGCTKCIKY) are cytoplasmic. Residues 13-33 (LLFVFNFVFWLAGGVILGVAL) traverse the membrane as a helical segment. Residues 34-63 (WLRHDPQTTNLLYLELGDKPAPNTFYVGIY) are Extracellular-facing. The helical transmembrane segment at 64 to 84 (ILIAVGAVMMFVGFLGCYGAI) threads the bilayer. The Cytoplasmic segment spans residues 85-89 (QESQC). Residues 90 to 112 (LLGTFFTCLVILFACEVAAGIWG) traverse the membrane as a helical segment. The Extracellular segment spans residues 113–201 (FVNKDQIAKD…QKIDDLFSGK (89 aa)). 2 disulfides stabilise this stretch: Cys156-Cys190 and Cys157-Cys175. A helical transmembrane segment spans residues 202-224 (LYLIGIAAIVVAVIMIFEMILSM). Position 219 (Glu219) interacts with cholesterol. Over 225–236 (VLCCGIRNSSVY) the chain is Cytoplasmic.

Belongs to the tetraspanin (TM4SF) family. Homodimer. Part of a complex composed of CD19, CR2/CD21, CD81 and IFITM1/CD225 in the membrane of mature B cells. Interacts (via the second extracellular domain) with CD19; this interaction is initiated early during biosynthesis in the ER and enables trafficking of only properly folded CD19. Part of a complex that includes MHC class II/HLA-DR molecules and IFITM1. Interacts with IFITM1. Interacts with IFITM2 and IFITM3. Part of integrin-tetraspanin complex composed of CD9, CD81, beta-1 and beta-2 integrins in the membrane of monocyte/macrophages. Interacts (via the second extracellular domain) with integrin ITGAV:ITGB3. Interacts with CD247/CD3 zeta, ICAM1 and CD9 at the immune synapse on T cell membrane. Part of a GPCR-tetraspanin complex consisting at least of ADGRG1, CD81, possibly CD9, and GNA11 in which CD81 enhances the association of ADGRG1 with GNA11. Part of a complex composed of CD9, CD81, PTGFRN and IGSF8. Interacts directly with IGSF8. Interacts with CD53 and SCIMP. Interacts with SAMHD1 (via its C-terminus). Interacts with glypican GPC3 and with the transcriptional repressor HHEX; binding to GPC3 decreases the availability of free CD81 for binding to HHEX, resulting in nuclear translocation of HHEX and transcriptional repression. Interacts with CLDN1. Interacts with CLDN6 and CLDN9. In terms of processing, not glycosylated. Post-translationally, likely constitutively palmitoylated at low levels. Protein palmitoylation is up-regulated upon coligation of BCR and CD9-C2R-CD81 complexes in lipid rafts.

Its subcellular location is the cell membrane. The protein resides in the basolateral cell membrane. Structural component of specialized membrane microdomains known as tetraspanin-enriched microdomains (TERMs), which act as platforms for receptor clustering and signaling. Essential for trafficking and compartmentalization of CD19 receptor on the surface of activated B cells. Upon initial encounter with microbial pathogens, enables the assembly of CD19-CR2/CD21 and B cell receptor (BCR) complexes at signaling TERMs, lowering the threshold dose of antigen required to trigger B cell clonal expansion and antibody production. In T cells, facilitates the localization of CD247/CD3 zeta at antigen-induced synapses with B cells, providing for costimulation and polarization toward T helper type 2 phenotype. Present in MHC class II compartments, may also play a role in antigen presentation. Can act both as positive and negative regulator of homotypic or heterotypic cell-cell fusion processes. Positively regulates sperm-egg fusion and may be involved in acrosome reaction. In myoblasts, associates with CD9 and PTGFRN and inhibits myotube fusion during muscle regeneration. In macrophages, associates with CD9 and beta-1 and beta-2 integrins, and prevents macrophage fusion into multinucleated giant cells specialized in ingesting complement-opsonized large particles. Also prevents the fusion of mononuclear cell progenitors into osteoclasts in charge of bone resorption. May regulate the compartmentalization of enzymatic activities. In T cells, defines the subcellular localization of dNTPase SAMHD1 and permits its degradation by the proteasome, thereby controlling intracellular dNTP levels. Also involved in cell adhesion and motility. Positively regulates integrin-mediated adhesion of macrophages, particularly relevant for the inflammatory response in the lung. The chain is CD81 antigen (CD81) from Pan troglodytes (Chimpanzee).